The following is a 316-amino-acid chain: Ester hydrolase C11orf54 homolog (316 aa).

Zn(2+) is bound by residues His-267, His-269, and His-279.

In terms of assembly, monomer. The cofactor is Zn(2+).

Its subcellular location is the nucleus. It localises to the cytoplasm. Functionally, exhibits ester hydrolase activity on the substrate p-nitrophenyl acetate, in vitro. May regulate DNA damage and repair by regulating HIF1A degradation via chaperone-mediated autophagy (CMA). The chain is Ester hydrolase C11orf54 homolog from Xenopus laevis (African clawed frog).